A 42-amino-acid chain; its full sequence is Potassium channel toxin gamma-KTx 3.4 (42 aa).

Intrachain disulfides connect Cys-5–Cys-23, Cys-11–Cys-34, Cys-20–Cys-39, and Cys-24–Cys-41.

This sequence belongs to the ergtoxin family. Gamma-KTx 3 subfamily. Expressed by the venom gland.

It localises to the secreted. Functionally, blocks Kv11/ERG potassium channels. The polypeptide is Potassium channel toxin gamma-KTx 3.4 (Centruroides gracilis (Slenderbrown scorpion)).